The chain runs to 158 residues: NAD(P)H-quinone oxidoreductase subunit J, chloroplastic (158 aa).

The protein belongs to the complex I 30 kDa subunit family. In terms of assembly, NDH is composed of at least 16 different subunits, 5 of which are encoded in the nucleus.

The protein localises to the plastid. It is found in the chloroplast thylakoid membrane. The catalysed reaction is a plastoquinone + NADH + (n+1) H(+)(in) = a plastoquinol + NAD(+) + n H(+)(out). The enzyme catalyses a plastoquinone + NADPH + (n+1) H(+)(in) = a plastoquinol + NADP(+) + n H(+)(out). Its function is as follows. NDH shuttles electrons from NAD(P)H:plastoquinone, via FMN and iron-sulfur (Fe-S) centers, to quinones in the photosynthetic chain and possibly in a chloroplast respiratory chain. The immediate electron acceptor for the enzyme in this species is believed to be plastoquinone. Couples the redox reaction to proton translocation, and thus conserves the redox energy in a proton gradient. The polypeptide is NAD(P)H-quinone oxidoreductase subunit J, chloroplastic (Acorus calamus var. americanus (American sweet flag)).